The following is a 172-amino-acid chain: Ribosome maturation factor RimM (172 aa).

Residues 96–168 (DGEFYYHEII…RVDVELLEGL (73 aa)) form the PRC barrel domain.

The protein belongs to the RimM family. In terms of assembly, binds ribosomal protein uS19.

It localises to the cytoplasm. In terms of biological role, an accessory protein needed during the final step in the assembly of 30S ribosomal subunit, possibly for assembly of the head region. Essential for efficient processing of 16S rRNA. May be needed both before and after RbfA during the maturation of 16S rRNA. It has affinity for free ribosomal 30S subunits but not for 70S ribosomes. The sequence is that of Ribosome maturation factor RimM from Streptococcus suis (strain 05ZYH33).